The sequence spans 301 residues: Probable alpha-L-glutamate ligase (301 aa).

Residues 104 to 287 enclose the ATP-grasp domain; the sequence is LQLLSRKGIG…VAGIIIEYLE (184 aa). ATP contacts are provided by residues lysine 141, 178–179, aspartate 187, and 211–213; these read EY and RSN. Residues aspartate 248, glutamate 260, and asparagine 262 each contribute to the Mg(2+) site. Mn(2+) contacts are provided by aspartate 248, glutamate 260, and asparagine 262.

The protein belongs to the RimK family. Requires Mg(2+) as cofactor. Mn(2+) serves as cofactor.

This Azotobacter vinelandii (strain DJ / ATCC BAA-1303) protein is Probable alpha-L-glutamate ligase.